The primary structure comprises 421 residues: E3 ubiquitin-protein ligase MARCHF4 (421 aa).

The N-terminal stretch at 1 to 16 (MLLAIGVIVWCWGLLS) is a signal peptide. Positions 60–79 (ELNAEGNATSSATESHSLAN) are disordered. Polar residues predominate over residues 65–77 (GNATSSATESHSL). The segment at 135–195 (DSGVRTPLCR…ELCYYKYQVI (61 aa)) adopts an RING-CH-type zinc-finger fold. Cys143, Cys146, Cys159, Cys161, His169, Cys172, Cys185, and Cys188 together coordinate Zn(2+). A run of 2 helical transmembrane segments spans residues 218-238 (IAAA…LVWS) and 252-272 (LFQI…ALIV). Disordered regions lie at residues 319–385 (PLTH…LPDH) and 401–421 (QEPR…VTTV). 2 stretches are compositionally biased toward polar residues: residues 367-380 (TEPQ…NGQP) and 403-412 (PRGQTSNSNR).

It is found in the golgi apparatus membrane. The enzyme catalyses S-ubiquitinyl-[E2 ubiquitin-conjugating enzyme]-L-cysteine + [acceptor protein]-L-lysine = [E2 ubiquitin-conjugating enzyme]-L-cysteine + N(6)-ubiquitinyl-[acceptor protein]-L-lysine.. It functions in the pathway protein modification; protein ubiquitination. In terms of biological role, E3 ubiquitin-protein ligase. E3 ubiquitin ligases accept ubiquitin from an E2 ubiquitin-conjugating enzyme in the form of a thioester and then directly transfer the ubiquitin to targeted substrates. The protein is E3 ubiquitin-protein ligase MARCHF4 (marchf4) of Danio rerio (Zebrafish).